A 340-amino-acid polypeptide reads, in one-letter code: UDP-N-acetylenolpyruvoylglucosamine reductase (340 aa).

The 171-residue stretch at 11 to 181 (ISVKAKKIIS…VAIGLKLKKK (171 aa)) folds into the FAD-binding PCMH-type domain. Arg156 is a catalytic residue. Ser227 functions as the Proton donor in the catalytic mechanism. Glu323 is a catalytic residue.

Belongs to the MurB family. Requires FAD as cofactor.

It is found in the cytoplasm. It catalyses the reaction UDP-N-acetyl-alpha-D-muramate + NADP(+) = UDP-N-acetyl-3-O-(1-carboxyvinyl)-alpha-D-glucosamine + NADPH + H(+). Its pathway is cell wall biogenesis; peptidoglycan biosynthesis. Functionally, cell wall formation. This is UDP-N-acetylenolpyruvoylglucosamine reductase from Wigglesworthia glossinidia brevipalpis.